The chain runs to 324 residues: MYNVKIENTGRYVPDNIVTNEDISKIVDTNDKWIRERTGIKERRISKGENTSHMAIKSAKDVLRKSSIKADELDLIIVATCTPDCFVPSTACIVQDAIGATKATCFDINAACTGFMYALSVASQFIKSGQSKNALVIGAETLSKMINWQDRGTCVLFADGAGAAILTRSEEVGLISQYTCSDGTGGKFLKCDALPVENPYVSEKTEFLNKLSMEGREVFKFAVNAMIDSVHKVLEKTDYTIEDIDYIVPHQANIRIIEYVAKKLKVSQDKFYINLHRYGNTSGASIPIALDEMNEKNMLKKGDKIILVGFGGGLTFGAHLIQWN.

Catalysis depends on residues Cys112 and His250. The tract at residues 251-255 (QANIR) is ACP-binding. Residue Asn280 is part of the active site.

This sequence belongs to the thiolase-like superfamily. FabH family. As to quaternary structure, homodimer.

The protein localises to the cytoplasm. It carries out the reaction malonyl-[ACP] + acetyl-CoA + H(+) = 3-oxobutanoyl-[ACP] + CO2 + CoA. The protein operates within lipid metabolism; fatty acid biosynthesis. Its function is as follows. Catalyzes the condensation reaction of fatty acid synthesis by the addition to an acyl acceptor of two carbons from malonyl-ACP. Catalyzes the first condensation reaction which initiates fatty acid synthesis and may therefore play a role in governing the total rate of fatty acid production. Possesses both acetoacetyl-ACP synthase and acetyl transacylase activities. Its substrate specificity determines the biosynthesis of branched-chain and/or straight-chain of fatty acids. In Clostridium novyi (strain NT), this protein is Beta-ketoacyl-[acyl-carrier-protein] synthase III.